The sequence spans 189 residues: Elongation factor P (189 aa).

The protein belongs to the elongation factor P family.

It is found in the cytoplasm. Its pathway is protein biosynthesis; polypeptide chain elongation. Its function is as follows. Involved in peptide bond synthesis. Stimulates efficient translation and peptide-bond synthesis on native or reconstituted 70S ribosomes in vitro. Probably functions indirectly by altering the affinity of the ribosome for aminoacyl-tRNA, thus increasing their reactivity as acceptors for peptidyl transferase. In Orientia tsutsugamushi (strain Boryong) (Rickettsia tsutsugamushi), this protein is Elongation factor P.